We begin with the raw amino-acid sequence, 359 residues long: Peptide chain release factor 1 (359 aa).

Q235 bears the N5-methylglutamine mark.

It belongs to the prokaryotic/mitochondrial release factor family. Post-translationally, methylated by PrmC. Methylation increases the termination efficiency of RF1.

The protein localises to the cytoplasm. Functionally, peptide chain release factor 1 directs the termination of translation in response to the peptide chain termination codons UAG and UAA. The protein is Peptide chain release factor 1 of Nitrosomonas eutropha (strain DSM 101675 / C91 / Nm57).